The following is a 77-amino-acid chain: Large ribosomal subunit protein bL28 (77 aa).

The protein belongs to the bacterial ribosomal protein bL28 family.

The chain is Large ribosomal subunit protein bL28 from Verminephrobacter eiseniae (strain EF01-2).